The primary structure comprises 520 residues: MTLRIVTPGSNTSLIQPGFSLLHFSSHVFYLGQKGWPKRSCPTGVFLLDLKNNDLKLRPATFTNDSCYLPPLRHPAVCSFSASQGGEITQYLIHGGKTPNNEISHKLYIMTMAFPVNKRFSLCCSEKDLAGDVPEARYGHSMNVVFSRGKNAVVMFGGRSYMPLNQRTTENWNNVIDCEPLVYLIDLQFGCSTSFNLRELQDGLSFHVSLARNDTVYIFGGHSLGNNFRPPNVYKIKVDLPLGSPAVSCTVINSKISFSSSIVTQTSPDEFVIVGGYESDSQKRLICNGVFLDDETIDIQEIETPDWTGEIKHSKTWFGADMGKGAVLFGIPVDNKHQSTDCSFFFYVLNFGDNDPALQTCSQGSTEEQEDSMPLEDSEEFTFNRDGNIFDEDTYNEDDEDDESVTGYWIKCCPDCDMDRNTWEPFYSTELNKPSMIFCSKDGGHWVHSQCMDLSETMLKYLSQNNIKYFCNEHVEVARGVQTPEKTPPVKKTSLKSVRKRTTINRLSAVKKSFLRRLFE.

Zn(2+)-binding residues include Cys412, Cys416, Cys439, His445, His448, Cys451, Cys471, and His474. Residues 415–477 form a PHD-type; atypical zinc finger; the sequence is DCDMDRNTWE…KYFCNEHVEV (63 aa).

This sequence belongs to the RAG2 family. Component of the RAG complex composed of core components rag1 and rag2. As to expression, expressed within the thymus, liver and spleen in juvenile frogs, and within the thymus and bone marrow of adults. A lower level expression is seen in the ovaries.

The protein resides in the nucleus. Core component of the RAG complex, a multiprotein complex that mediates the DNA cleavage phase during V(D)J recombination. V(D)J recombination assembles a diverse repertoire of immunoglobulin and T-cell receptor genes in developing B and T lymphocytes through rearrangement of different V (variable), in some cases D (diversity), and J (joining) gene segments. DNA cleavage by the RAG complex occurs in 2 steps: a first nick is introduced in the top strand immediately upstream of the heptamer, generating a 3'-hydroxyl group that can attack the phosphodiester bond on the opposite strand in a direct transesterification reaction, thereby creating 4 DNA ends: 2 hairpin coding ends and 2 blunt, 5'-phosphorylated ends. In the RAG complex, rag2 is not the catalytic component but is required for all known catalytic activities mediated by RAG1. It probably acts as a sensor of chromatin state that recruits the RAG complex to H3K4me3. This chain is V(D)J recombination-activating protein 2 (rag2), found in Xenopus laevis (African clawed frog).